The primary structure comprises 523 residues: Cytochrome P450 monooxygenase ple5B (523 aa).

Residues 16-33 traverse the membrane as a helical segment; sequence IAAAAAGSAVAVYKLLQL. N-linked (GlcNAc...) asparagine glycans are attached at residues Asn-82, Asn-103, Asn-122, Asn-295, Asn-379, and Asn-423. Cys-446 lines the heme pocket.

Belongs to the cytochrome P450 family. Heme serves as cofactor.

The protein localises to the membrane. Its pathway is secondary metabolite biosynthesis; terpenoid biosynthesis. Cytochrome P450 monooxygenase; part of the gene cluster that mediates the biosynthesis of pleuromutilin, a tricyclic diterpene showing antibacterial properties. The geranylgeranyl diphosphate (GGPP) synthase ple4 catalyzes the first step in pleuromutilin biosynthesis. GGPP is then substrate of the premutilin synthase (PS) ple3 to yield premutilin. Premutilin synthase is a bifunctional enzyme composed of the fusion of a class II diterpene cyclase (DTC) and a class I diterpene synthase (DTS), with the corresponding domains and active sites containing characteristic aspartate-rich motifs. GGPP is first converted to mutildienyl-diphosphate (MPP) at the class II DTC site. MPP is subsequently further cyclized at the class I DTS site, followed by a 1,5-hydride shift and addition of water prior to terminating deprotonation, to yield premutilin. The cytochrome P450 monooxygenases ple5 and ple6 hydroxylate premutilin at C-11 and C-3, respectively, producing 11-hydroxypremutilin and 3-hydroxypremutilin. The combination of the actions of both ple5 and ple6 leads to the production of 3,11-dihydroxypremutilin. The short chain dehydrogenase ple7 further converts 3,11-dihydroxypremutilin into mutilin. The acetyltransferase ple2 then acetylates mutilin to produce 14-O-acetylmutilin. Finally, the cytochrome P450 monooxygenase ple1 catalyzes hydroxylation on the alpha position of the acetyl side chain of 14-O-acetylmutilin to yield pleuromutilin. The sequence is that of Cytochrome P450 monooxygenase ple5B from Rhodocybe pseudopiperita (Clitopilus pseudopiperitus).